Reading from the N-terminus, the 214-residue chain is Large ribosomal subunit protein uL3 (214 aa).

Gln153 is modified (N5-methylglutamine).

This sequence belongs to the universal ribosomal protein uL3 family. Part of the 50S ribosomal subunit. Forms a cluster with proteins L14 and L19. Post-translationally, methylated by PrmB.

Functionally, one of the primary rRNA binding proteins, it binds directly near the 3'-end of the 23S rRNA, where it nucleates assembly of the 50S subunit. The sequence is that of Large ribosomal subunit protein uL3 from Methylobacillus flagellatus (strain ATCC 51484 / DSM 6875 / VKM B-1610 / KT).